Reading from the N-terminus, the 140-residue chain is Large ribosomal subunit protein uL16 (140 aa).

It belongs to the universal ribosomal protein uL16 family. Part of the 50S ribosomal subunit.

Binds 23S rRNA and is also seen to make contacts with the A and possibly P site tRNAs. This is Large ribosomal subunit protein uL16 from Malacoplasma penetrans (strain HF-2) (Mycoplasma penetrans).